Reading from the N-terminus, the 129-residue chain is Transcriptional activator protein (129 aa).

Positions 1–12 (MRSSSPSQPPSI) are enriched in low complexity. The tract at residues 1–23 (MRSSSPSQPPSIKKAHRQAKKRA) is disordered. Residues 13-23 (KKAHRQAKKRA) show a composition bias toward basic residues. The short motif at 13–28 (KKAHRQAKKRAIRRRR) is the Nuclear localization signal element. A zinc finger spans residues 33-50 (CGCSIYFHIDCAGHGFTH). Residues 73–117 (LFQDKPSRGHAIHQDQDIQRPNPVQPQPQESIGSPQSIPELPSLD) are disordered. The segment covering 99-109 (QPQESIGSPQS) has biased composition (polar residues). The transactivation stretch occupies residues 115-129 (SLDDIDDSFWVELFS).

The protein belongs to the geminiviridae transcriptional activator protein family. Monomer. Homodimer. Homooligomer. Self-interaction correlates with nuclear localization and efficient activation of transcription. Monomers suppress local silencing by interacting with and inactivating host adenosine kinase 2 (ADK2) in the cytoplasm. Interacts with and inhibits host SNF1 kinase. Binds to ssDNA. In terms of processing, phosphorylated.

The protein localises to the host nucleus. It localises to the host cytoplasm. Strong activator of the late viral genes promoters. Enhances the expression of the capsid protein and nuclear shuttle protein. Acts as a suppressor of RNA-mediated gene silencing, also known as post-transcriptional gene silencing (PTGS), a mechanism of plant viral defense that limits the accumulation of viral RNAs. Suppresses the host RNA silencing by inhibiting adenosine kinase 2 (ADK2), a kinase involved in a general methylation pathway. Also suppresses the host basal defense by interacting with and inhibiting SNF1 kinase, a key regulator of cell metabolism implicated in innate antiviral defense. Determines pathogenicity. This chain is Transcriptional activator protein, found in Solanum tuberosum (Potato).